The chain runs to 1014 residues: Pre-mRNA-processing ATP-dependent RNA helicase prp11 (1014 aa).

A compositionally biased stretch (basic residues) spans 1 to 11 (MSRRTRSRSPP). The segment at 1 to 149 (MSRRTRSRSP…SRFDRTERVG (149 aa)) is disordered. 2 stretches are compositionally biased toward basic and acidic residues: residues 15 to 87 (YNRE…EYAR) and 106 to 121 (RHAE…KSDE). A Q motif motif is present at residues 418–446 (TSWSQCGLSAQTISVINSLGYEKPTSIQA). The Helicase ATP-binding domain maps to 449–627 (IPAITSGRDV…RKVLKKPVEI (179 aa)). 462–469 (AKTGSGKT) contributes to the ATP binding site. The DEAD box motif lies at 575–578 (DEAD). Residues 638–802 (EVEQIVEVRP…PVPKELQTLA (165 aa)) form the Helicase C-terminal domain. Residues 815 to 875 (KAAGGGFGGK…PEKSTGDPTL (61 aa)) form a disordered region. Composition is skewed to basic and acidic residues over residues 827-838 (SRLDETRNAERK) and 855-875 (AEAK…DPTL).

Belongs to the DEAD box helicase family. DDX46/PRP5 subfamily.

The protein localises to the nucleus. The enzyme catalyses ATP + H2O = ADP + phosphate + H(+). Functionally, ATP-dependent RNA helicase involved in pre-spliceosome/complex A assembly and mRNA splicing. Bridges U1 and U2 snRNPs during pre-spliceosome assembly and enables stable U2 snRNP association with intron RNA. Through its helicase activity probably catalyzes an ATP-dependent conformational change of U2 snRNP. The polypeptide is Pre-mRNA-processing ATP-dependent RNA helicase prp11 (prp11) (Schizosaccharomyces pombe (strain 972 / ATCC 24843) (Fission yeast)).